The sequence spans 617 residues: Putative type VI secretion system protein VgrGA (617 aa).

Disordered stretches follow at residues 325–344 (GQQP…TLSN) and 449–469 (RTFH…TRTS).

The protein belongs to the VgrG protein family.

A Vgr protein that is probably part of a type VI secretion system (T6SS). May be required for export of proteins involved in Rhs-mediated cellular contact-dependent growth inhibition (CDI). This chain is Putative type VI secretion system protein VgrGA (vgrGA), found in Dickeya dadantii (strain 3937) (Erwinia chrysanthemi (strain 3937)).